A 118-amino-acid chain; its full sequence is UPF0295 protein BC_0520 (118 aa).

2 helical membrane passes run 12–32 (IRTFALSLVFIGLFIAYLGVF) and 43–63 (FMMVGFLAVIASTVVYFWIGM).

Belongs to the UPF0295 family.

Its subcellular location is the cell membrane. This Bacillus cereus (strain ATCC 14579 / DSM 31 / CCUG 7414 / JCM 2152 / NBRC 15305 / NCIMB 9373 / NCTC 2599 / NRRL B-3711) protein is UPF0295 protein BC_0520.